Reading from the N-terminus, the 390-residue chain is 5-hydroxytryptamine receptor 1B (390 aa).

Residues 1–46 are Extracellular-facing; it reads MEEPGAQCAPPPPAGSETWVPQANLSSAPSQNCSAKDYIYQDSISL. N24 and N32 each carry an N-linked (GlcNAc...) asparagine glycan. Residues 47–72 form a helical membrane-spanning segment; it reads PWKVLLVMLLALITLATTLSNAFVIA. Over 73-86 the chain is Cytoplasmic; sequence TVYRTRKLHTPANY. Residues 87–111 form a helical membrane-spanning segment; it reads LIASLAVTDLLVSILVMPISTMYTV. Over 112–119 the chain is Extracellular; that stretch reads TGRWTLGQ. The helical transmembrane segment at 120 to 145 threads the bilayer; sequence VVCDFWLSSDITCCTASILHLCVIAL. C122 and C199 are oxidised to a cystine. D129 and T134 together coordinate ergotamine. Positions 146 to 148 match the DRY motif; important for ligand-induced conformation changes and signaling motif; sequence DRY. The Cytoplasmic portion of the chain corresponds to 146 to 165; it reads DRYWAITDAVEYSAKRTPKR. Residues 166–184 form a helical membrane-spanning segment; that stretch reads AAVMIALVWVFSISISLPP. The Extracellular portion of the chain corresponds to 185–205; it reads FFWRQAKAEEEVSECVVNTDH. V201 provides a ligand contact to ergotamine. Residues 206–229 traverse the membrane as a helical segment; that stretch reads ILYTVYSTVGAFYFPTLLLIALYG. The Cytoplasmic segment spans residues 230-315; sequence RIYVEARSRI…AARERKATKT (86 aa). Polar residues predominate over residues 259–272; that stretch reads DSPGSTSSVTSINS. The tract at residues 259-281 is disordered; sequence DSPGSTSSVTSINSRVPDVPSES. Residues 316–337 traverse the membrane as a helical segment; it reads LGIILGAFIVCWLPFFIISLVM. At 338 to 347 the chain is on the extracellular side; sequence PICKDACWFH. Residues 348 to 370 traverse the membrane as a helical segment; sequence LAIFDFFTWLGYLNSLINPIIYT. Positions 365 to 369 match the NPxxY motif; important for ligand-induced conformation changes and signaling motif; the sequence is NPIIY. The Cytoplasmic portion of the chain corresponds to 371-390; that stretch reads MSNEDFKQAFHKLIRFKCTS. C388 carries the S-palmitoyl cysteine lipid modification.

This sequence belongs to the G-protein coupled receptor 1 family. Homodimer. Heterodimer with HTR1D. Post-translationally, phosphorylated. Desensitization of the receptor may be mediated by its phosphorylation. In terms of processing, palmitoylated. As to expression, detected in cerebral artery smooth muscle cells (at protein level). Detected in brain cortex, striatum, amygdala, medulla, hippocampus, caudate nucleus and putamen.

It is found in the cell membrane. Functionally, G-protein coupled receptor for 5-hydroxytryptamine (serotonin). Also functions as a receptor for ergot alkaloid derivatives, various anxiolytic and antidepressant drugs and other psychoactive substances, such as lysergic acid diethylamide (LSD). Ligand binding causes a conformation change that triggers signaling via guanine nucleotide-binding proteins (G proteins) and modulates the activity of downstream effectors, such as adenylate cyclase. HTR1B is coupled to G(i)/G(o) G alpha proteins and mediates inhibitory neurotransmission by inhibiting adenylate cyclase activity. Arrestin family members inhibit signaling via G proteins and mediate activation of alternative signaling pathways. Regulates the release of 5-hydroxytryptamine, dopamine and acetylcholine in the brain, and thereby affects neural activity, nociceptive processing, pain perception, mood and behavior. Besides, plays a role in vasoconstriction of cerebral arteries. This is 5-hydroxytryptamine receptor 1B from Homo sapiens (Human).